A 223-amino-acid polypeptide reads, in one-letter code: uncharacterized protein (223 aa).

The protein to M.jannaschii MJ0575.

This is an uncharacterized protein from Methanocaldococcus jannaschii (strain ATCC 43067 / DSM 2661 / JAL-1 / JCM 10045 / NBRC 100440) (Methanococcus jannaschii).